Consider the following 207-residue polypeptide: Holliday junction branch migration complex subunit RuvA (207 aa).

Residues 1-65 are domain I; sequence MYDYIRGTLT…ETEHLLYGFH (65 aa). Residues 66-144 form a domain II region; the sequence is SREERECFRI…DLLPLDSRVE (79 aa). Residues 145-150 form a flexible linker region; sequence TSQTHT. The interval 150-207 is domain III; sequence TTSSCLEEGIQALAALGYSKIAAERMIAEAIKDLPEGSSLTDILPIALKKNFSGVNKD.

This sequence belongs to the RuvA family. In terms of assembly, homotetramer. Forms an RuvA(8)-RuvB(12)-Holliday junction (HJ) complex. HJ DNA is sandwiched between 2 RuvA tetramers; dsDNA enters through RuvA and exits via RuvB. An RuvB hexamer assembles on each DNA strand where it exits the tetramer. Each RuvB hexamer is contacted by two RuvA subunits (via domain III) on 2 adjacent RuvB subunits; this complex drives branch migration. In the full resolvosome a probable DNA-RuvA(4)-RuvB(12)-RuvC(2) complex forms which resolves the HJ.

The protein resides in the cytoplasm. The RuvA-RuvB-RuvC complex processes Holliday junction (HJ) DNA during genetic recombination and DNA repair, while the RuvA-RuvB complex plays an important role in the rescue of blocked DNA replication forks via replication fork reversal (RFR). RuvA specifically binds to HJ cruciform DNA, conferring on it an open structure. The RuvB hexamer acts as an ATP-dependent pump, pulling dsDNA into and through the RuvAB complex. HJ branch migration allows RuvC to scan DNA until it finds its consensus sequence, where it cleaves and resolves the cruciform DNA. The chain is Holliday junction branch migration complex subunit RuvA from Chlamydia pneumoniae (Chlamydophila pneumoniae).